The sequence spans 827 residues: Cadherin-17 (827 aa).

The N-terminal stretch at Met-1 to Lys-25 is a signal peptide. Over Phe-26–Met-786 the chain is Extracellular. 7 Cadherin domains span residues Pro-29–Gln-127, Ser-128–Pro-243, Val-244–Cys-339, Leu-340–Phe-448, Glu-449–Phe-565, Pro-566–Leu-666, and Ala-667–Gly-776. 7 N-linked (GlcNAc...) asparagine glycosylation sites follow: Asn-148, Asn-249, Asn-418, Asn-545, Asn-573, Asn-586, and Asn-721. A helical transmembrane segment spans residues Ala-787 to Ile-807. Topologically, residues Arg-808 to Ser-827 are cytoplasmic.

In terms of tissue distribution, highest expression is found in intestine with lower expression in spleen, bone marrow, lung and testis. No expression detected in liver, kidney, heart, brain or skeletal muscle. Expressed in precursor B-cells and myeloid cells.

The protein resides in the cell membrane. In terms of biological role, cadherins are calcium-dependent cell adhesion proteins. They preferentially interact with themselves in a homophilic manner in connecting cells; cadherins may thus contribute to the sorting of heterogeneous cell types. LI-cadherin may have a role in the morphological organization of liver and intestine. This Mus musculus (Mouse) protein is Cadherin-17 (Cdh17).